A 409-amino-acid polypeptide reads, in one-letter code: Sharpin (409 aa).

The interval 1–178 (MAPPAGGTAA…EKEELAGRLT (178 aa)) is self-association. The segment at 121 to 164 (EGQNGSDSLPPALGPETRPVSPPSPLEVPTPKAPKPKVDLPWSP) is disordered. A compositionally biased stretch (pro residues) spans 140-153 (VSPPSPLEVPTPKA). Position 163 is a phosphoserine (Ser-163). Positions 173–300 (LAGRLTRAVE…LLSAPREAPG (128 aa)) are interaction with SHANK1. In terms of domain architecture, Ubiquitin-like spans 217–280 (IRLQVTVEDA…PEHSLAFYGV (64 aa)). Ser-302 carries the phosphoserine modification. Positions 315–337 (RLFPQSLGLPPTPQPTSSSLPSP) are disordered. Low complexity predominate over residues 318–336 (PQSLGLPPTPQPTSSSLPS). A RanBP2-type zinc finger spans residues 338-367 (LQPGWPCPSCTFINAPSRPGCEMCSTQRPC). Residues 384-409 (TRREDGPSLPGPRSLDPLLNLSGNLC) are disordered.

Monomer and homodimer. Component of the LUBAC complex (linear ubiquitin chain assembly complex) which consists of SHARPIN, RBCK1 and RNF31. LUBAC has a MW of approximately 600 kDa suggesting a heteromultimeric assembly of its subunits. Associates with the TNF-R1 signaling complex (TNF-RSC) in a stimulation-dependent manner. Interacts with EYA1, EYA2, SHANK1 and SHANK3 (via ANK repeats).

Its subcellular location is the cytoplasm. The protein localises to the cytosol. It is found in the synapse. It functions in the pathway protein modification; protein ubiquitination. Component of the LUBAC complex which conjugates linear polyubiquitin chains in a head-to-tail manner to substrates and plays a key role in NF-kappa-B activation and regulation of inflammation. LUBAC conjugates linear polyubiquitin to IKBKG and RIPK1 and is involved in activation of the canonical NF-kappa-B and the JNK signaling pathways. Linear ubiquitination mediated by the LUBAC complex interferes with TNF-induced cell death and thereby prevents inflammation. LUBAC is recruited to the TNF-R1 signaling complex (TNF-RSC) following polyubiquitination of TNF-RSC components by BIRC2 and/or BIRC3 and to conjugate linear polyubiquitin to IKBKG and possibly other components contributing to the stability of the complex. The LUBAC complex is also involved in innate immunity by conjugating linear polyubiquitin chains at the surface of bacteria invading the cytosol to form the ubiquitin coat surrounding bacteria. LUBAC is not able to initiate formation of the bacterial ubiquitin coat, and can only promote formation of linear polyubiquitins on pre-existing ubiquitin. The bacterial ubiquitin coat acts as an 'eat-me' signal for xenophagy and promotes NF-kappa-B activation. Together with OTULIN, the LUBAC complex regulates the canonical Wnt signaling during angiogenesis. In Bos taurus (Bovine), this protein is Sharpin (SHARPIN).